The following is a 382-amino-acid chain: Bestrophin-6 (382 aa).

4 helical membrane passes run 29–49 (WKLIHRELFMWLVLYYTVLAI), 68–88 (FINFEPSILTFMLSFFVTTIV), 231–251 (LAYPQVIFFAVRLYFVICAFA), and 265–285 (VIHYYFPIVTVFQFICLMGWL).

The protein belongs to the anion channel-forming bestrophin (TC 1.A.46) family. Calcium-sensitive chloride channel subfamily.

It is found in the membrane. This Caenorhabditis elegans protein is Bestrophin-6 (best-6).